We begin with the raw amino-acid sequence, 206 residues long: Ribosomal RNA large subunit methyltransferase E (206 aa).

5 residues coordinate S-adenosyl-L-methionine: Gly-61, Trp-63, Asp-81, Asp-97, and Asp-122. Lys-162 functions as the Proton acceptor in the catalytic mechanism.

It belongs to the class I-like SAM-binding methyltransferase superfamily. RNA methyltransferase RlmE family.

The protein localises to the cytoplasm. It carries out the reaction uridine(2552) in 23S rRNA + S-adenosyl-L-methionine = 2'-O-methyluridine(2552) in 23S rRNA + S-adenosyl-L-homocysteine + H(+). Specifically methylates the uridine in position 2552 of 23S rRNA at the 2'-O position of the ribose in the fully assembled 50S ribosomal subunit. The sequence is that of Ribosomal RNA large subunit methyltransferase E from Neisseria gonorrhoeae (strain ATCC 700825 / FA 1090).